A 205-amino-acid chain; its full sequence is uncharacterized protein (205 aa).

The span at 1–25 (MSNNNNEAQQPVESTNVESQQNVVQ) shows a compositional bias: polar residues. The tract at residues 1-205 (MSNNNNEAQQ…TSDPAQQVEA (205 aa)) is disordered. Residues 32–79 (NENNDNNNNNNNNNNNNNNNNNNNNNNNNSNNNNNSSNNENNENNENN) show a composition bias toward low complexity. The span at 80–122 (SCEKSEQEKPKEPEEPVQEEKSKEPCDQQKVKENEPAEEKETE) shows a compositional bias: basic and acidic residues. Composition is skewed to low complexity over residues 123-132 (PAAPVEPENP) and 146-162 (QHQQQNHEPQQTSNGES). Residues 170–185 (SENKKRSIDEAGDIKD) are compositionally biased toward basic and acidic residues. The span at 194–205 (VETSDPAQQVEA) shows a compositional bias: polar residues.

This is an uncharacterized protein from Dictyostelium discoideum (Social amoeba).